The following is a 219-amino-acid chain: Vacuolar protein sorting-associated protein 32 homolog 2 (219 aa).

2 coiled-coil regions span residues 10–41 (KQEANALQTLDKLNETLEMLEKKEKVLLKKAG) and 117–176 (TNID…QLLQ). The segment at 168 to 219 (EELESQLLQPATTAPPLPSVPVPAGRQPARPVPQKRTAEEEELAALQAEMAL) is disordered.

This sequence belongs to the SNF7 family. In terms of assembly, component of the endosomal sorting required for transport complex III (ESCRT-III), composed at least of VPS2, VPS20, VPS24 and VPS32. Interacts with SKD1. Interacts with BRO1/ALIX.

It is found in the endosome. Functionally, component of the ESCRT-III complex, which is required for multivesicular bodies (MVBs) formation and sorting of endosomal cargo proteins into MVBs. The ESCRT-III complex is probably involved in the concentration of MVB cargo. The protein is Vacuolar protein sorting-associated protein 32 homolog 2 (VPS32.2) of Arabidopsis thaliana (Mouse-ear cress).